The chain runs to 23 residues: Alpha-conotoxin-like RgIB (23 aa).

2 disulfides stabilise this stretch: C5/C11 and C6/C19. The tract at residues 7–9 is lacks the Ser-Xaa-Pro motif that is crucial for potent interaction with nAChR; that stretch reads KNP.

Expressed by venom duct.

The protein localises to the secreted. In terms of biological role, alpha-conotoxins act on postsynaptic membranes, they bind to the nicotinic acetylcholine receptors (nAChR) and thus inhibit them. Is a specific blocker of the alpha-3-beta-4/CHRNA3-CHRNB4 image nAChR and may also block alpha-3-beta-4-alpha-5 (CHRNA3-CHRNB4-CHRNA5) channels. Has possibly a distinct nAChR binding mode from other alpha-conotoxins, due to a different three residue motif (lacks the Ser-Xaa-Pro motif). In vivo, causes hyperactivity and behavioral disorders in mice following intracranial injection. This chain is Alpha-conotoxin-like RgIB, found in Conus regius (Crown cone).